We begin with the raw amino-acid sequence, 260 residues long: Thiazole synthase (260 aa).

Residue Lys-96 is the Schiff-base intermediate with DXP of the active site. Residues Gly-157, 184 to 185, and 206 to 207 contribute to the 1-deoxy-D-xylulose 5-phosphate site; these read AG and NT.

The protein belongs to the ThiG family. In terms of assembly, homotetramer. Forms heterodimers with either ThiH or ThiS.

Its subcellular location is the cytoplasm. It carries out the reaction [ThiS sulfur-carrier protein]-C-terminal-Gly-aminoethanethioate + 2-iminoacetate + 1-deoxy-D-xylulose 5-phosphate = [ThiS sulfur-carrier protein]-C-terminal Gly-Gly + 2-[(2R,5Z)-2-carboxy-4-methylthiazol-5(2H)-ylidene]ethyl phosphate + 2 H2O + H(+). The protein operates within cofactor biosynthesis; thiamine diphosphate biosynthesis. In terms of biological role, catalyzes the rearrangement of 1-deoxy-D-xylulose 5-phosphate (DXP) to produce the thiazole phosphate moiety of thiamine. Sulfur is provided by the thiocarboxylate moiety of the carrier protein ThiS. In vitro, sulfur can be provided by H(2)S. The sequence is that of Thiazole synthase from Bradyrhizobium sp. (strain BTAi1 / ATCC BAA-1182).